Here is a 301-residue protein sequence, read N- to C-terminus: Acetylglutamate kinase (301 aa).

Substrate-binding positions include 68 to 69 (GG), R90, and N195.

It belongs to the acetylglutamate kinase family. ArgB subfamily.

It localises to the cytoplasm. The catalysed reaction is N-acetyl-L-glutamate + ATP = N-acetyl-L-glutamyl 5-phosphate + ADP. It participates in amino-acid biosynthesis; L-arginine biosynthesis; N(2)-acetyl-L-ornithine from L-glutamate: step 2/4. Catalyzes the ATP-dependent phosphorylation of N-acetyl-L-glutamate. The chain is Acetylglutamate kinase from Pseudomonas fluorescens (strain Pf0-1).